The primary structure comprises 287 residues: Putative sugar uptake protein spyM18_2243 (287 aa).

The next 10 membrane-spanning stretches (helical) occupy residues 4–26 (IFYA…KIGG), 33–50 (LGMT…WLIV), 55–72 (TLQL…WSIG), 85–107 (VSVA…GVLV), 117–134 (FVVG…FYFS), 154–171 (FRAL…AVLF), 181–200 (SVIL…FMSF), 207–229 (YVIK…LLAA), 234–256 (LAIA…ILFL), and 268–285 (VVTG…LGVV).

Belongs to the GRP transporter (TC 2.A.7.5) family.

Its subcellular location is the cell membrane. In Streptococcus pyogenes serotype M18 (strain MGAS8232), this protein is Putative sugar uptake protein spyM18_2243.